The sequence spans 305 residues: UPF0612 protein C337.02c (305 aa).

Coiled coils occupy residues 27-63 (IERY…MKYE) and 120-207 (NDMN…DARS).

This sequence belongs to the UPF0612 family.

The sequence is that of UPF0612 protein C337.02c from Schizosaccharomyces pombe (strain 972 / ATCC 24843) (Fission yeast).